Consider the following 618-residue polypeptide: Proline--tRNA ligase (618 aa).

The protein belongs to the class-II aminoacyl-tRNA synthetase family. ProS type 1 subfamily. As to quaternary structure, homodimer.

The protein resides in the cytoplasm. It carries out the reaction tRNA(Pro) + L-proline + ATP = L-prolyl-tRNA(Pro) + AMP + diphosphate. Its function is as follows. Catalyzes the attachment of proline to tRNA(Pro) in a two-step reaction: proline is first activated by ATP to form Pro-AMP and then transferred to the acceptor end of tRNA(Pro). As ProRS can inadvertently accommodate and process non-cognate amino acids such as alanine and cysteine, to avoid such errors it has two additional distinct editing activities against alanine. One activity is designated as 'pretransfer' editing and involves the tRNA(Pro)-independent hydrolysis of activated Ala-AMP. The other activity is designated 'posttransfer' editing and involves deacylation of mischarged Ala-tRNA(Pro). The misacylated Cys-tRNA(Pro) is not edited by ProRS. The sequence is that of Proline--tRNA ligase from Streptococcus pyogenes serotype M5 (strain Manfredo).